Consider the following 314-residue polypeptide: Serine protease 46 (314 aa).

The Peptidase S1 domain occupies 44–281 (VVNGKVVEVG…FTQWIKRQIG (238 aa)). Residues Cys-69 and Cys-85 are joined by a disulfide bond. Residues His-84 and Asp-130 each act as charge relay system in the active site. Disulfide bonds link Cys-164-Cys-239, Cys-197-Cys-219, and Cys-229-Cys-257. The active-site Charge relay system is Ser-233. The helical transmembrane segment at 293 to 313 (FLSPFILTGYILLVSLGSLWL) threads the bilayer.

This sequence belongs to the peptidase S1 family.

It is found in the membrane. In Rattus norvegicus (Rat), this protein is Serine protease 46 (Prss46).